Consider the following 277-residue polypeptide: Energy-coupling factor transporter transmembrane protein EcfT (277 aa).

6 consecutive transmembrane segments (helical) span residues 39–59, 61–81, 85–105, 121–141, 163–183, and 254–274; these read ITIL…YAII, FFCF…WNGV, IGLI…GHVF, AIYI…MTVT, VPVD…PTLF, and SKYD…LLIF.

Belongs to the energy-coupling factor EcfT family. Forms a stable energy-coupling factor (ECF) transporter complex composed of 2 membrane-embedded substrate-binding proteins (S component), 2 ATP-binding proteins (A component) and 2 transmembrane proteins (T component). May be able to interact with more than 1 S component at a time.

The protein resides in the cell membrane. In terms of biological role, transmembrane (T) component of an energy-coupling factor (ECF) ABC-transporter complex. Unlike classic ABC transporters this ECF transporter provides the energy necessary to transport a number of different substrates. This chain is Energy-coupling factor transporter transmembrane protein EcfT, found in Lactobacillus helveticus (strain DPC 4571).